The following is a 255-amino-acid chain: NAD(P)H-quinone oxidoreductase subunit K, chloroplastic (255 aa).

[4Fe-4S] cluster contacts are provided by Cys-47, Cys-48, Cys-112, and Cys-143.

It belongs to the complex I 20 kDa subunit family. In terms of assembly, NDH is composed of at least 16 different subunits, 5 of which are encoded in the nucleus. [4Fe-4S] cluster serves as cofactor.

The protein localises to the plastid. It localises to the chloroplast thylakoid membrane. It catalyses the reaction a plastoquinone + NADH + (n+1) H(+)(in) = a plastoquinol + NAD(+) + n H(+)(out). The catalysed reaction is a plastoquinone + NADPH + (n+1) H(+)(in) = a plastoquinol + NADP(+) + n H(+)(out). NDH shuttles electrons from NAD(P)H:plastoquinone, via FMN and iron-sulfur (Fe-S) centers, to quinones in the photosynthetic chain and possibly in a chloroplast respiratory chain. The immediate electron acceptor for the enzyme in this species is believed to be plastoquinone. Couples the redox reaction to proton translocation, and thus conserves the redox energy in a proton gradient. The protein is NAD(P)H-quinone oxidoreductase subunit K, chloroplastic of Zygnema circumcarinatum (Green alga).